Reading from the N-terminus, the 561-residue chain is Mesoderm induction early response protein 2 (561 aa).

Disordered regions lie at residues 1–28 (MAEA…GEPN) and 52–188 (QNYG…EDPL). Serine 11 carries the phosphoserine modification. Residues 140–165 (QSSADDLTPSVTSHEASDLFPSQSGS) show a composition bias toward polar residues. The ELM2 domain occupies 195-292 (KEIMVGPQFQ…EALRRLRFNV (98 aa)). The SANT domain maps to 297-349 (DGLCAWSEEERRNFEHGFRVHGKNFHLIQANKVRTRSVGECVEYYYLWKKSER). A disordered region spans residues 360-515 (GRRKYGPSGN…DGEPEETVGP (156 aa)). Positions 417–428 (LSMGSSMSRSLG) are enriched in low complexity. The segment covering 439–451 (SSEPGPRLFPPLD) has biased composition (pro residues). The segment covering 453-482 (PSALPSSRRPPALAEPAFFPPATAAPEPGA) has biased composition (low complexity).

In terms of assembly, part of a complex containing at least CDYL, MIER1, MIER2, HDAC1 and HDAC2.

The protein resides in the nucleus. Functionally, transcriptional repressor. The chain is Mesoderm induction early response protein 2 (MIER2) from Bos taurus (Bovine).